The following is a 352-amino-acid chain: Molybdenum import ATP-binding protein ModC (352 aa).

Residues 1–229 (MLELNFSQTL…SVMNPWLPKE (229 aa)) enclose the ABC transporter domain. Residue 31 to 38 (GVSGAGKT) participates in ATP binding. In terms of domain architecture, Mop spans 289-352 (QTSIRNVLRA…AQIKSVSITA (64 aa)).

This sequence belongs to the ABC transporter superfamily. Molybdate importer (TC 3.A.1.8) family. In terms of assembly, the complex is composed of two ATP-binding proteins (ModC), two transmembrane proteins (ModB) and a solute-binding protein (ModA).

It localises to the cell inner membrane. The enzyme catalyses molybdate(out) + ATP + H2O = molybdate(in) + ADP + phosphate + H(+). Functionally, part of the ABC transporter complex ModABC involved in molybdenum import. Responsible for energy coupling to the transport system. In Shigella boydii serotype 4 (strain Sb227), this protein is Molybdenum import ATP-binding protein ModC.